Reading from the N-terminus, the 190-residue chain is Peptide deformylase (190 aa).

Residues Cys-94 and His-136 each coordinate Fe cation. Residue Glu-137 is part of the active site. His-140 is a binding site for Fe cation.

It belongs to the polypeptide deformylase family. Requires Fe(2+) as cofactor.

It carries out the reaction N-terminal N-formyl-L-methionyl-[peptide] + H2O = N-terminal L-methionyl-[peptide] + formate. Its function is as follows. Removes the formyl group from the N-terminal Met of newly synthesized proteins. Requires at least a dipeptide for an efficient rate of reaction. N-terminal L-methionine is a prerequisite for activity but the enzyme has broad specificity at other positions. The chain is Peptide deformylase from Chlorobium phaeovibrioides (strain DSM 265 / 1930) (Prosthecochloris vibrioformis (strain DSM 265)).